A 252-amino-acid polypeptide reads, in one-letter code: Trans-aconitate 2-methyltransferase (252 aa).

It belongs to the methyltransferase superfamily. Tam family.

Its subcellular location is the cytoplasm. It carries out the reaction trans-aconitate + S-adenosyl-L-methionine = (E)-3-(methoxycarbonyl)pent-2-enedioate + S-adenosyl-L-homocysteine. Catalyzes the S-adenosylmethionine monomethyl esterification of trans-aconitate. The polypeptide is Trans-aconitate 2-methyltransferase (Escherichia coli O1:K1 / APEC).